The chain runs to 477 residues: Glycogen synthase (477 aa).

K15 serves as a coordination point for ADP-alpha-D-glucose.

Belongs to the glycosyltransferase 1 family. Bacterial/plant glycogen synthase subfamily.

The catalysed reaction is [(1-&gt;4)-alpha-D-glucosyl](n) + ADP-alpha-D-glucose = [(1-&gt;4)-alpha-D-glucosyl](n+1) + ADP + H(+). The protein operates within glycan biosynthesis; glycogen biosynthesis. In terms of biological role, synthesizes alpha-1,4-glucan chains using ADP-glucose. The chain is Glycogen synthase from Caldicellulosiruptor saccharolyticus (strain ATCC 43494 / DSM 8903 / Tp8T 6331).